We begin with the raw amino-acid sequence, 207 residues long: Superoxide dismutase [Mn] (207 aa).

Residues histidine 28, histidine 76, aspartate 160, and histidine 164 each coordinate Mn(2+).

It belongs to the iron/manganese superoxide dismutase family. The cofactor is Mn(2+).

The catalysed reaction is 2 superoxide + 2 H(+) = H2O2 + O2. Its function is as follows. Destroys superoxide anion radicals which are normally produced within the cells and which are toxic to biological systems. The protein is Superoxide dismutase [Mn] (sodA) of Nocardia asteroides.